Here is a 397-residue protein sequence, read N- to C-terminus: KNASPDDLKKAYRKAAIKNHPDKGGDPEKFKELAQAYDVLSDPEKREIYDQYGEDALKEGMGGGGGDHDPFDIFQSFFGGGGFGGGGSSRGRRQRRGEDVVHPLKVSLEELYNGTSKKLSLSRNVICSKCNGKGSKSGASMRCASCQGSGMKVSIRQLGPGMIQQMQHPCNDCKGTGEMINDKDRCPLCKGEKVVQEKKVLEVHVEKGMQNGQRITFPGEADEAPDTVTGDIVFVLQQKEHPKFQRKGDDLFYKHTLSLTEALCGFQFVLTHLDGRQLLIKSNPGEVVKPDQFKAINDEGMPMYQRPFMRGKLYIQFLVDFPDSLTPDQCKVIESVLPRSASSQLTDMEIDECEETTMHDVNIEEEMRRKQHQHAQEAYDEDDEGHGGGQRVQCAQQ.

Residues 1 to 52 (KNASPDDLKKAYRKAAIKNHPDKGGDPEKFKELAQAYDVLSDPEKREIYDQY) form the J domain. The CR-type zinc finger occupies 114 to 198 (GTSKKLSLSR…CKGEKVVQEK (85 aa)). CXXCXGXG motif repeat units follow at residues 127–134 (CSKCNGKG), 143–150 (CASCQGSG), 170–177 (CNDCKGTG), and 186–193 (CPLCKGEK). Residues 367–397 (MRRKQHQHAQEAYDEDDEGHGGGQRVQCAQQ) are disordered. Position 394 is a cysteine methyl ester (Cys-394). The S-farnesyl cysteine moiety is linked to residue Cys-394. Positions 395 to 397 (AQQ) are cleaved as a propeptide — removed in mature form.

The protein resides in the membrane. Functionally, plays a continuous role in plant development probably in the structural organization of compartments. This is DnaJ protein homolog 1 (DNAJ1) from Allium porrum (Leek).